A 404-amino-acid chain; its full sequence is Zinc finger protein zfs1 (404 aa).

The segment covering 134–149 (SYLHSGSSPHGNTSNH) has biased composition (polar residues). 2 disordered regions span residues 134–168 (SYLHSGSSPHGNTSNHPSPISSLESLPSRSSTGSG) and 259–322 (SNAS…APNG). Low complexity predominate over residues 150-168 (PSPISSLESLPSRSSTGSG). Over residues 259–283 (SNASIRNAPSNLSKQFSPSGNSPLT) the composition is skewed to polar residues. Low complexity predominate over residues 304–317 (GSASHPHGSGSSNG). C3H1-type zinc fingers lie at residues 326–354 (LYKTEPCKNWQISGTCRYGSKCQFAHGNQ) and 364–392 (KYKSERCRSFMMYGYCPYGLRCCFLHDES).

In terms of assembly, interacts with moc3.

Its subcellular location is the cytoplasm. It is found in the nucleus. Binds to specific AU-rich elements (ARE) in the 3'-untranslated region of target mRNAs and promotes their degradation. Binds to ARE present in the arz1 mRNA and stimulates the rate of arz1 mRNA decay. Required for coordination of septum formation with exit from mitosis. Involved in the mating response pathway. Induces sexual development and ascus formation. This is Zinc finger protein zfs1 (zfs1) from Schizosaccharomyces pombe (strain 972 / ATCC 24843) (Fission yeast).